A 798-amino-acid chain; its full sequence is Galactinol--sucrose galactosyltransferase (798 aa).

Belongs to the glycosyl hydrolases 36 family.

The catalysed reaction is alpha-D-galactosyl-(1-&gt;3)-1D-myo-inositol + sucrose = raffinose + myo-inositol. Inhibited by 1-deoxygalactonojirimycin. Not inhibited by stachyose. Strong inhibition of the hydrolytic activity by sucrose. In terms of biological role, transglycosidase operating by a ping-pong reaction mechanism. Involved in the synthesis of raffinose, a major soluble carbohydrate in seeds, roots and tubers. Able to utilize D-ononitol and D-pinitol as acceptors. May also act as a glycoside hydrolase. This Pisum sativum (Garden pea) protein is Galactinol--sucrose galactosyltransferase (RFS).